Reading from the N-terminus, the 157-residue chain is Phosphopantetheine adenylyltransferase (157 aa).

Ser9 is a binding site for substrate. ATP-binding positions include 9–10 (SF) and His17. Substrate contacts are provided by Lys41, Thr73, and Arg87. ATP contacts are provided by residues 88 to 90 (GIR), Glu98, and 122 to 128 (YQDISSS).

This sequence belongs to the bacterial CoaD family. In terms of assembly, homohexamer. The cofactor is Mg(2+).

Its subcellular location is the cytoplasm. It catalyses the reaction (R)-4'-phosphopantetheine + ATP + H(+) = 3'-dephospho-CoA + diphosphate. The protein operates within cofactor biosynthesis; coenzyme A biosynthesis; CoA from (R)-pantothenate: step 4/5. Its function is as follows. Reversibly transfers an adenylyl group from ATP to 4'-phosphopantetheine, yielding dephospho-CoA (dPCoA) and pyrophosphate. The sequence is that of Phosphopantetheine adenylyltransferase from Oenococcus oeni (strain ATCC BAA-331 / PSU-1).